Reading from the N-terminus, the 609-residue chain is Altered inheritance of mitochondria protein 9, mitochondrial (609 aa).

Residues 1–24 (MSIIQARCIGNLTRRSIVNVMSRR) constitute a mitochondrion transit peptide.

Belongs to the AIM9 family.

Its subcellular location is the mitochondrion. This is Altered inheritance of mitochondria protein 9, mitochondrial (AIM9) from Meyerozyma guilliermondii (strain ATCC 6260 / CBS 566 / DSM 6381 / JCM 1539 / NBRC 10279 / NRRL Y-324) (Yeast).